The following is a 338-amino-acid chain: Aspartate-semialdehyde dehydrogenase (338 aa).

NADP(+)-binding positions include 9–12 and 37–38; these read TGQV and RS. Arg93 contributes to the phosphate binding site. The active-site Acyl-thioester intermediate is the Cys123. Gln150 contacts substrate. 153–154 contacts NADP(+); sequence SG. Lys220 contributes to the phosphate binding site. Residue Arg242 coordinates substrate. His249 serves as the catalytic Proton acceptor. Asn316 contacts NADP(+).

This sequence belongs to the aspartate-semialdehyde dehydrogenase family. In terms of assembly, homodimer.

It carries out the reaction L-aspartate 4-semialdehyde + phosphate + NADP(+) = 4-phospho-L-aspartate + NADPH + H(+). It functions in the pathway amino-acid biosynthesis; L-lysine biosynthesis via DAP pathway; (S)-tetrahydrodipicolinate from L-aspartate: step 2/4. Its pathway is amino-acid biosynthesis; L-methionine biosynthesis via de novo pathway; L-homoserine from L-aspartate: step 2/3. The protein operates within amino-acid biosynthesis; L-threonine biosynthesis; L-threonine from L-aspartate: step 2/5. Functionally, catalyzes the NADPH-dependent formation of L-aspartate-semialdehyde (L-ASA) by the reductive dephosphorylation of L-aspartyl-4-phosphate. The protein is Aspartate-semialdehyde dehydrogenase of Streptomyces akiyoshiensis.